Consider the following 344-residue polypeptide: Phenylalanine--tRNA ligase alpha subunit (344 aa).

Glutamate 256 contributes to the Mg(2+) binding site.

The protein belongs to the class-II aminoacyl-tRNA synthetase family. Phe-tRNA synthetase alpha subunit type 1 subfamily. Tetramer of two alpha and two beta subunits. The cofactor is Mg(2+).

The protein localises to the cytoplasm. The catalysed reaction is tRNA(Phe) + L-phenylalanine + ATP = L-phenylalanyl-tRNA(Phe) + AMP + diphosphate + H(+). This chain is Phenylalanine--tRNA ligase alpha subunit (pheS), found in Halalkalibacterium halodurans (strain ATCC BAA-125 / DSM 18197 / FERM 7344 / JCM 9153 / C-125) (Bacillus halodurans).